The primary structure comprises 331 residues: RNA 3'-terminal phosphate cyclase (331 aa).

ATP is bound by residues glutamine 100 and 276–280 (HLADQ). The active-site Tele-AMP-histidine intermediate is histidine 301.

It belongs to the RNA 3'-terminal cyclase family. Type 1 subfamily.

Its subcellular location is the cytoplasm. The catalysed reaction is a 3'-end 3'-phospho-ribonucleotide-RNA + ATP = a 3'-end 2',3'-cyclophospho-ribonucleotide-RNA + AMP + diphosphate. Its function is as follows. Catalyzes the conversion of 3'-phosphate to a 2',3'-cyclic phosphodiester at the end of RNA. The mechanism of action of the enzyme occurs in 3 steps: (A) adenylation of the enzyme by ATP; (B) transfer of adenylate to an RNA-N3'P to produce RNA-N3'PP5'A; (C) and attack of the adjacent 2'-hydroxyl on the 3'-phosphorus in the diester linkage to produce the cyclic end product. The biological role of this enzyme is unknown but it is likely to function in some aspects of cellular RNA processing. This is RNA 3'-terminal phosphate cyclase from Methanococcoides burtonii (strain DSM 6242 / NBRC 107633 / OCM 468 / ACE-M).